Reading from the N-terminus, the 101-residue chain is Chaperone modulatory protein CbpM (101 aa).

This sequence belongs to the CbpM family.

Its function is as follows. Interacts with CbpA and inhibits both the DnaJ-like co-chaperone activity and the DNA binding activity of CbpA. Together with CbpA, modulates the activity of the DnaK chaperone system. Does not inhibit the co-chaperone activity of DnaJ. This is Chaperone modulatory protein CbpM from Pseudomonas putida (strain ATCC 700007 / DSM 6899 / JCM 31910 / BCRC 17059 / LMG 24140 / F1).